The chain runs to 431 residues: Cleavage stimulation factor subunit 1 (431 aa).

6 WD repeats span residues 106–145, 171–210, 215–254, 260–301, 303–343, and 395–431; these read SHKG…AKSA, DHVD…AKRA, QEAE…CFVS, QHTD…TTFE, AHDG…TLVR, and GHNN…STTD.

Homodimer. The CSTF complex is composed of CSTF1 (50 kDa subunit), CSTF2 (64 kDa subunit) and CSTF3 (77 kDa subunit). Interacts (via repeats WD) directly with CSTF3. Interacts (via repeat WD6) with BARD1. Interacts with ERCC6.

The protein resides in the nucleus. In terms of biological role, one of the multiple factors required for polyadenylation and 3'-end cleavage of mammalian pre-mRNAs. May be responsible for the interaction of CSTF with other factors to form a stable complex on the pre-mRNA. The chain is Cleavage stimulation factor subunit 1 (Cstf1) from Mus musculus (Mouse).